Here is a 734-residue protein sequence, read N- to C-terminus: 1,4-alpha-glucan branching enzyme GlgB (734 aa).

Aspartate 414 serves as the catalytic Nucleophile. Catalysis depends on glutamate 467, which acts as the Proton donor.

This sequence belongs to the glycosyl hydrolase 13 family. GlgB subfamily. In terms of assembly, monomer.

The enzyme catalyses Transfers a segment of a (1-&gt;4)-alpha-D-glucan chain to a primary hydroxy group in a similar glucan chain.. The protein operates within glycan biosynthesis; glycogen biosynthesis. In terms of biological role, catalyzes the formation of the alpha-1,6-glucosidic linkages in glycogen by scission of a 1,4-alpha-linked oligosaccharide from growing alpha-1,4-glucan chains and the subsequent attachment of the oligosaccharide to the alpha-1,6 position. The polypeptide is 1,4-alpha-glucan branching enzyme GlgB (Myxococcus xanthus (strain DK1622)).